A 311-amino-acid chain; its full sequence is Lipoyl synthase (311 aa).

Cys-47, Cys-52, Cys-58, Cys-73, Cys-77, Cys-80, and Ser-287 together coordinate [4Fe-4S] cluster. One can recognise a Radical SAM core domain in the interval 59 to 276 (WTKKHATVMI…AQIARAKGFL (218 aa)).

It belongs to the radical SAM superfamily. Lipoyl synthase family. It depends on [4Fe-4S] cluster as a cofactor.

It is found in the cytoplasm. It carries out the reaction [[Fe-S] cluster scaffold protein carrying a second [4Fe-4S](2+) cluster] + N(6)-octanoyl-L-lysyl-[protein] + 2 oxidized [2Fe-2S]-[ferredoxin] + 2 S-adenosyl-L-methionine + 4 H(+) = [[Fe-S] cluster scaffold protein] + N(6)-[(R)-dihydrolipoyl]-L-lysyl-[protein] + 4 Fe(3+) + 2 hydrogen sulfide + 2 5'-deoxyadenosine + 2 L-methionine + 2 reduced [2Fe-2S]-[ferredoxin]. It participates in protein modification; protein lipoylation via endogenous pathway; protein N(6)-(lipoyl)lysine from octanoyl-[acyl-carrier-protein]: step 2/2. In terms of biological role, catalyzes the radical-mediated insertion of two sulfur atoms into the C-6 and C-8 positions of the octanoyl moiety bound to the lipoyl domains of lipoate-dependent enzymes, thereby converting the octanoylated domains into lipoylated derivatives. The chain is Lipoyl synthase from Sphingopyxis alaskensis (strain DSM 13593 / LMG 18877 / RB2256) (Sphingomonas alaskensis).